The following is a 223-amino-acid chain: Ribosomal RNA small subunit methyltransferase G (223 aa).

The S-adenosyl-L-methionine site is built by glycine 85, phenylalanine 90, and arginine 154.

It belongs to the methyltransferase superfamily. RNA methyltransferase RsmG family.

The protein localises to the cytoplasm. It carries out the reaction guanosine(527) in 16S rRNA + S-adenosyl-L-methionine = N(7)-methylguanosine(527) in 16S rRNA + S-adenosyl-L-homocysteine. Specifically methylates the N7 position of guanine in position 527 of 16S rRNA. The chain is Ribosomal RNA small subunit methyltransferase G from Rhodopseudomonas palustris (strain TIE-1).